The primary structure comprises 133 residues: Small ribosomal subunit protein uS8 (133 aa).

Belongs to the universal ribosomal protein uS8 family. As to quaternary structure, part of the 30S ribosomal subunit. Contacts proteins S5 and S12.

One of the primary rRNA binding proteins, it binds directly to 16S rRNA central domain where it helps coordinate assembly of the platform of the 30S subunit. The sequence is that of Small ribosomal subunit protein uS8 from Anaplasma phagocytophilum (strain HZ).